The chain runs to 53 residues: VSVDCSEYPQPTCTTEHRPVCGSNNETYGNKCNFCNAVVKSNGTLTVSHFGKC.

The 51-residue stretch at 3–53 (VDCSEYPQPTCTTEHRPVCGSNNETYGNKCNFCNAVVKSNGTLTVSHFGKC) folds into the Kazal-like domain. Intrachain disulfides connect Cys-5–Cys-35, Cys-13–Cys-32, and Cys-21–Cys-53. A glycan (N-linked (GlcNAc...) asparagine) is linked at Asn-42.

Its subcellular location is the secreted. This Polyplectron bicalcaratum (Grey peacock-pheasant) protein is Ovomucoid.